Consider the following 282-residue polypeptide: 4-diphosphocytidyl-2-C-methyl-D-erythritol kinase (282 aa).

The active site involves Lys-8. Position 91-101 (91-101 (PVAAGLAGGST)) interacts with ATP. The active site involves Asp-133.

It belongs to the GHMP kinase family. IspE subfamily.

It catalyses the reaction 4-CDP-2-C-methyl-D-erythritol + ATP = 4-CDP-2-C-methyl-D-erythritol 2-phosphate + ADP + H(+). The protein operates within isoprenoid biosynthesis; isopentenyl diphosphate biosynthesis via DXP pathway; isopentenyl diphosphate from 1-deoxy-D-xylulose 5-phosphate: step 3/6. Catalyzes the phosphorylation of the position 2 hydroxy group of 4-diphosphocytidyl-2C-methyl-D-erythritol. The polypeptide is 4-diphosphocytidyl-2-C-methyl-D-erythritol kinase (Symbiobacterium thermophilum (strain DSM 24528 / JCM 14929 / IAM 14863 / T)).